The primary structure comprises 447 residues: N-succinylarginine dihydrolase (447 aa).

Substrate-binding positions include 19–28, Asn-110, and 137–138; these read AGLSFGNEAS and HR. The active site involves Glu-174. Arg-212 is a binding site for substrate. Residue His-248 is part of the active site. Residues Asp-250 and Asn-359 each coordinate substrate. Cys-365 (nucleophile) is an active-site residue.

Belongs to the succinylarginine dihydrolase family. As to quaternary structure, homodimer.

It catalyses the reaction N(2)-succinyl-L-arginine + 2 H2O + 2 H(+) = N(2)-succinyl-L-ornithine + 2 NH4(+) + CO2. The protein operates within amino-acid degradation; L-arginine degradation via AST pathway; L-glutamate and succinate from L-arginine: step 2/5. Functionally, catalyzes the hydrolysis of N(2)-succinylarginine into N(2)-succinylornithine, ammonia and CO(2). This Salmonella agona (strain SL483) protein is N-succinylarginine dihydrolase.